A 274-amino-acid chain; its full sequence is Putative ankyrin repeat protein R597 (274 aa).

ANK repeat units lie at residues 78-112, 114-144, 146-174, and 176-205; these read VGLP…NNND, PISE…SLKI, SRYH…DIQG, and NLSY…NIND.

The chain is Putative ankyrin repeat protein R597 from Acanthamoeba polyphaga mimivirus (APMV).